The sequence spans 122 residues: Early nodulin-10 (122 aa).

Residues 1-36 (MTCTLKSPPKMASFFLSSLVLMFIAALILLPQGLAA) form the signal peptide. Repeat copies occupy residues 45 to 49 (PPDSE), 51 to 55 (PPYRN), 58 to 62 (PPFAL), 68 to 72 (APIYK), 77 to 81 (PPIYN), 82 to 86 (PPIYE), 88 to 92 (PPTYK), 99 to 103 (PPPFQ), 106 to 110 (PPFYK), and 113 to 117 (PPSQK). Positions 45-117 (PPDSELPPYR…FYKQAPPSQK (73 aa)) are 10 X 5 AA approximate repeats of P-P-X-X-X. The interval 90–122 (TYKPSKKRLPPPFQKLPPFYKQAPPSQKLPRVN) is disordered.

As to expression, root nodules. In early nodules, expressed only in the interior of the developing nodule with no expression in other nodule tissues, including meristem. In slightly older nodules, expressed in almost all cells of the central zone. In more mature nodules, expression is restricted to the invasion zone.

The protein is Early nodulin-10 (ENOD10) of Medicago sativa (Alfalfa).